The following is a 300-amino-acid chain: Glutamyl-Q tRNA(Asp) synthetase (300 aa).

Residues R14–T18 and E50 contribute to the L-glutamate site. The 'HIGH' region motif lies at P17–S27. Residues C106, C108, Y120, and C124 each contribute to the Zn(2+) site. Positions 177 and 195 each coordinate L-glutamate. The 'KMSKS' region motif lies at K233–S237. Residue K236 coordinates ATP.

It belongs to the class-I aminoacyl-tRNA synthetase family. GluQ subfamily. Zn(2+) is required as a cofactor.

Catalyzes the tRNA-independent activation of glutamate in presence of ATP and the subsequent transfer of glutamate onto a tRNA(Asp). Glutamate is transferred on the 2-amino-5-(4,5-dihydroxy-2-cyclopenten-1-yl) moiety of the queuosine in the wobble position of the QUC anticodon. The protein is Glutamyl-Q tRNA(Asp) synthetase of Pseudomonas putida (strain ATCC 700007 / DSM 6899 / JCM 31910 / BCRC 17059 / LMG 24140 / F1).